We begin with the raw amino-acid sequence, 245 residues long: Uridylate kinase (245 aa).

12–15 (KLSG) lines the ATP pocket. The segment at 20–25 (GEKGVG) is involved in allosteric activation by GTP. UMP is bound at residue glycine 54. 2 residues coordinate ATP: glycine 55 and arginine 59. Residues aspartate 74 and 135–142 (IGSPYFST) each bind UMP. ATP-binding residues include asparagine 163, tyrosine 169, and aspartate 172.

It belongs to the UMP kinase family. In terms of assembly, homohexamer.

The protein localises to the cytoplasm. It catalyses the reaction UMP + ATP = UDP + ADP. The protein operates within pyrimidine metabolism; CTP biosynthesis via de novo pathway; UDP from UMP (UMPK route): step 1/1. Its activity is regulated as follows. Allosterically activated by GTP. Inhibited by UTP. In terms of biological role, catalyzes the reversible phosphorylation of UMP to UDP. The protein is Uridylate kinase of Streptococcus thermophilus (strain ATCC BAA-491 / LMD-9).